A 248-amino-acid chain; its full sequence is Triosephosphate isomerase (248 aa).

Substrate contacts are provided by N11 and K13. The Electrophile role is filled by H95. E165 functions as the Proton acceptor in the catalytic mechanism.

Belongs to the triosephosphate isomerase family. In terms of assembly, homodimer.

The protein resides in the cytoplasm. It carries out the reaction dihydroxyacetone phosphate = methylglyoxal + phosphate. The catalysed reaction is D-glyceraldehyde 3-phosphate = dihydroxyacetone phosphate. It participates in carbohydrate degradation; glycolysis; D-glyceraldehyde 3-phosphate from glycerone phosphate: step 1/1. Its pathway is carbohydrate biosynthesis; gluconeogenesis. In terms of biological role, triosephosphate isomerase is an extremely efficient metabolic enzyme that catalyzes the interconversion between dihydroxyacetone phosphate (DHAP) and D-glyceraldehyde-3-phosphate (G3P) in glycolysis and gluconeogenesis. Functionally, it is also responsible for the non-negligible production of methylglyoxal a reactive cytotoxic side-product that modifies and can alter proteins, DNA and lipids. The polypeptide is Triosephosphate isomerase (tpi1) (Xenopus laevis (African clawed frog)).